The sequence spans 735 residues: Probable E3 ubiquitin-protein ligase MID2 (735 aa).

An RING-type zinc finger spans residues 30–80 (CPICLELFEDPLLLPCAHSLCFSCAHRILVSSCSSGESIEPITAFQCPTCR). The segment at 137–184 (IACQFCEQDPPRDAVKTCITCEVSYCDRCLRATHPNKKPFTSHRLVEP) adopts a B box-type 1; degenerate zinc-finger fold. A B box-type 2 zinc finger spans residues 190 to 232 (LRGITCLDHENEKVNMYCVSDDQLICALCKLVGRHRDHQVASL). Zn(2+) is bound by residues C195, H198, C218, and H224. Residues 233 to 301 (NDRFEKLKQT…IIQQRKQMIA (69 aa)) adopt a coiled-coil conformation. One can recognise a COS domain in the interval 340–399 (LKENDQARFLQSAKNIAERVAMATASSQVLIPDINFNDAFENFALDFSREKKLLEGLDYL). Positions 398 to 531 (YLTAPNPPSI…RNSEPTRLKT (134 aa)) constitute a Fibronectin type-III domain. The region spanning 516–709 (INQAGSRNSE…ILSGLPAPDF (194 aa)) is the B30.2/SPRY domain.

It belongs to the TRIM/RBCC family. In terms of assembly, homodimer or heterodimer with MID1. Interacts with IGBP1. Phosphorylated on serine and threonine residues. In terms of tissue distribution, low level in fetal kidney and lung, and in adult prostate, ovary and small intestine.

It localises to the cytoplasm. It is found in the cytoskeleton. It carries out the reaction S-ubiquitinyl-[E2 ubiquitin-conjugating enzyme]-L-cysteine + [acceptor protein]-L-lysine = [E2 ubiquitin-conjugating enzyme]-L-cysteine + N(6)-ubiquitinyl-[acceptor protein]-L-lysine.. Its pathway is protein modification; protein ubiquitination. In terms of biological role, E3 ubiquitin ligase that plays a role in microtubule stabilization. Mediates the 'Lys-48'-linked polyubiquitination of LRRK2 to drive its localization to microtubules and its proteasomal degradation in neurons. This ubiquitination inhibits LRRK2 kinase activation by RAB29. The chain is Probable E3 ubiquitin-protein ligase MID2 (MID2) from Homo sapiens (Human).